We begin with the raw amino-acid sequence, 392 residues long: Protein O-glucosyltransferase 1 (392 aa).

The N-terminal stretch at 1 to 23 is a signal peptide; the sequence is MEWWASSPLRLWLLLFLLPSAQG. N-linked (GlcNAc...) asparagine glycosylation is found at Asn-40 and Asn-53. 4 disulfides stabilise this stretch: Cys-49-Cys-56, Cys-54-Cys-357, Cys-102-Cys-108, and Cys-263-Cys-286. An interaction with the consensus sequence C-X-S-X-[PA]-C in peptide substrates region spans residues 103-107; sequence MFPSR. Asp-133 acts as the Proton donor/acceptor in catalysis. The interval 172-178 is interaction with the consensus sequence C-X-S-X-[PA]-C in peptide substrates; sequence AVWPIYP. Tyr-177 contributes to the UDP-alpha-D-glucose binding site. N-linked (GlcNAc...) asparagine glycosylation occurs at Asn-204. UDP-alpha-D-glucose is bound by residues Ser-212, Arg-218, and 274–279; that span reads VAASFR. Asn-373 is a glycosylation site (N-linked (GlcNAc...) asparagine). The Prevents secretion from ER motif lies at 389–392; sequence KTEL.

The protein belongs to the glycosyltransferase 90 family. In terms of tissue distribution, expressed in most adult tissues at different intensities. Abundantly expressed in liver. Expressed also in brain, heart, skeletal muscle, spleen, kidney, placenta, lung and peripheral blood leukocyte. Not detectable in colon, thymus and small intestine. Expressed in the epidermis, especially in the upper parts, stratum spinosum and stratum granulosum (at protein level).

The protein resides in the endoplasmic reticulum lumen. The catalysed reaction is L-seryl-[EGF-like domain protein] + UDP-alpha-D-xylose = 3-O-(beta-D-xylosyl)-L-seryl-[EGF-like domain protein] + UDP + H(+). It catalyses the reaction L-seryl-[EGF-like domain protein] + UDP-alpha-D-glucose = 3-O-(beta-D-glucosyl)-L-seryl-[EGF-like domain protein] + UDP + H(+). Its pathway is protein modification; protein glycosylation. Its function is as follows. Dual specificity glycosyltransferase that catalyzes the transfer of glucose and xylose from UDP-glucose and UDP-xylose, respectively, to a serine residue found in the consensus sequence of C-X-S-X-P-C. Specifically targets extracellular EGF repeats of protein such as CRB2, F7, F9 and NOTCH2. Acts as a positive regulator of Notch signaling by mediating O-glucosylation of Notch, leading to regulate muscle development. Notch glucosylation does not affect Notch ligand binding. Required during early development to promote gastrulation: acts by mediating O-glucosylation of CRB2, which is required for CRB2 localization to the cell membrane. In Homo sapiens (Human), this protein is Protein O-glucosyltransferase 1.